Here is a 441-residue protein sequence, read N- to C-terminus: 3-phosphoshikimate 1-carboxyvinyltransferase (441 aa).

The 3-phosphoshikimate site is built by lysine 26, serine 27, and arginine 31. Position 26 (lysine 26) interacts with phosphoenolpyruvate. Residues glycine 99 and arginine 127 each coordinate phosphoenolpyruvate. The 3-phosphoshikimate site is built by serine 173, serine 174, glutamine 175, serine 203, aspartate 320, and lysine 347. Position 175 (glutamine 175) interacts with phosphoenolpyruvate. The active-site Proton acceptor is the aspartate 320. Positions 351, 393, and 423 each coordinate phosphoenolpyruvate.

The protein belongs to the EPSP synthase family. In terms of assembly, monomer.

The protein resides in the cytoplasm. The enzyme catalyses 3-phosphoshikimate + phosphoenolpyruvate = 5-O-(1-carboxyvinyl)-3-phosphoshikimate + phosphate. The protein operates within metabolic intermediate biosynthesis; chorismate biosynthesis; chorismate from D-erythrose 4-phosphate and phosphoenolpyruvate: step 6/7. Its function is as follows. Catalyzes the transfer of the enolpyruvyl moiety of phosphoenolpyruvate (PEP) to the 5-hydroxyl of shikimate-3-phosphate (S3P) to produce enolpyruvyl shikimate-3-phosphate and inorganic phosphate. This chain is 3-phosphoshikimate 1-carboxyvinyltransferase, found in Janthinobacterium sp. (strain Marseille) (Minibacterium massiliensis).